The primary structure comprises 419 residues: tRNA modification GTPase MnmE (419 aa).

The (6S)-5-formyl-5,6,7,8-tetrahydrofolate site is built by Arg20, Glu76, and Arg115. The region spanning 211 to 348 is the TrmE-type G domain; the sequence is GYEVAIIGPP…LLDLVYDRLR (138 aa). Asn221 contributes to the K(+) binding site. Residues 221-226, 240-246, and 265-268 each bind GTP; these read NAGKST, SEIAGTT, and DTAG. Residue Ser225 participates in Mg(2+) binding. 3 residues coordinate K(+): Ser240, Ile242, and Thr245. Thr246 serves as a coordination point for Mg(2+). Residue Lys419 coordinates (6S)-5-formyl-5,6,7,8-tetrahydrofolate.

The protein belongs to the TRAFAC class TrmE-Era-EngA-EngB-Septin-like GTPase superfamily. TrmE GTPase family. As to quaternary structure, homodimer. Heterotetramer of two MnmE and two MnmG subunits. Requires K(+) as cofactor.

The protein resides in the cytoplasm. In terms of biological role, exhibits a very high intrinsic GTPase hydrolysis rate. Involved in the addition of a carboxymethylaminomethyl (cmnm) group at the wobble position (U34) of certain tRNAs, forming tRNA-cmnm(5)s(2)U34. The sequence is that of tRNA modification GTPase MnmE from Paracoccus denitrificans (strain Pd 1222).